We begin with the raw amino-acid sequence, 37 residues long: Non-specific lipid-transfer protein (37 aa).

Belongs to the plant LTP family.

Plant non-specific lipid-transfer proteins transfer phospholipids as well as galactolipids across membranes. May play a role in wax or cutin deposition in the cell walls of expanding epidermal cells and certain secretory tissues. The protein is Non-specific lipid-transfer protein of Artemisia vulgaris (Mugwort).